A 394-amino-acid chain; its full sequence is Chalcone synthase 4 (394 aa).

The active site involves cysteine 165.

This sequence belongs to the thiolase-like superfamily. Chalcone/stilbene synthases family.

It carries out the reaction (E)-4-coumaroyl-CoA + 3 malonyl-CoA + 3 H(+) = 2',4,4',6'-tetrahydroxychalcone + 3 CO2 + 4 CoA. It participates in secondary metabolite biosynthesis; flavonoid biosynthesis. The primary product of this enzyme is 4,2',4',6'-tetrahydroxychalcone (also termed naringenin-chalcone or chalcone) which can under specific conditions spontaneously isomerize into naringenin. This chain is Chalcone synthase 4 (CHS4), found in Bromheadia finlaysoniana (Orchid).